Consider the following 402-residue polypeptide: Exodeoxyribonuclease 7 large subunit (402 aa).

It belongs to the XseA family. As to quaternary structure, heterooligomer composed of large and small subunits.

It localises to the cytoplasm. The catalysed reaction is Exonucleolytic cleavage in either 5'- to 3'- or 3'- to 5'-direction to yield nucleoside 5'-phosphates.. Bidirectionally degrades single-stranded DNA into large acid-insoluble oligonucleotides, which are then degraded further into small acid-soluble oligonucleotides. This chain is Exodeoxyribonuclease 7 large subunit, found in Streptomyces coelicolor (strain ATCC BAA-471 / A3(2) / M145).